A 415-amino-acid polypeptide reads, in one-letter code: Gamma-glutamyl phosphate reductase (415 aa).

This sequence belongs to the gamma-glutamyl phosphate reductase family.

The protein localises to the cytoplasm. It carries out the reaction L-glutamate 5-semialdehyde + phosphate + NADP(+) = L-glutamyl 5-phosphate + NADPH + H(+). It participates in amino-acid biosynthesis; L-proline biosynthesis; L-glutamate 5-semialdehyde from L-glutamate: step 2/2. Its function is as follows. Catalyzes the NADPH-dependent reduction of L-glutamate 5-phosphate into L-glutamate 5-semialdehyde and phosphate. The product spontaneously undergoes cyclization to form 1-pyrroline-5-carboxylate. This chain is Gamma-glutamyl phosphate reductase, found in Listeria monocytogenes serotype 4a (strain HCC23).